A 243-amino-acid chain; its full sequence is MNAEKPPVAHNVDLEEIAKFEAVASRWWDTEGEFKPLHRINPLRLGYIAERAGGLFGKKVLDVGCGGGILSESMAREGANVTGLDMGAEPLAVARLHALESGVELNYVQQTVEEHAAQHAGAYDVVTCMEMLEHVPDPRSVVQACAQLVKPGGHVFFSTLNRNAKSWLMAVVGAEYVLRMVPKGTHDAKKFIRPSELLGWVDETPLEERHIIGLHYNPLTNRFKLAPGVDVNYMLHTQAKKPV.

Residues Arg44, Gly64, Asp85, and Met129 each coordinate S-adenosyl-L-methionine.

This sequence belongs to the methyltransferase superfamily. UbiG/COQ3 family.

It catalyses the reaction a 3-demethylubiquinol + S-adenosyl-L-methionine = a ubiquinol + S-adenosyl-L-homocysteine + H(+). The catalysed reaction is a 3-(all-trans-polyprenyl)benzene-1,2-diol + S-adenosyl-L-methionine = a 2-methoxy-6-(all-trans-polyprenyl)phenol + S-adenosyl-L-homocysteine + H(+). Its pathway is cofactor biosynthesis; ubiquinone biosynthesis. Its function is as follows. O-methyltransferase that catalyzes the 2 O-methylation steps in the ubiquinone biosynthetic pathway. The protein is Ubiquinone biosynthesis O-methyltransferase of Cronobacter sakazakii (strain ATCC BAA-894) (Enterobacter sakazakii).